Reading from the N-terminus, the 322-residue chain is tRNA-specific adenosine deaminase subunit TAD3 (322 aa).

A CMP/dCMP-type deaminase domain is found at 162–283 (EVRNELSRAS…EMQRTGSLKL (122 aa)). Residues H216, C254, C257, and C322 each coordinate Zn(2+).

Belongs to the cytidine and deoxycytidylate deaminase family. ADAT3 subfamily. In terms of assembly, heterodimer with TAD2.

Its subcellular location is the cytoplasm. It is found in the nucleus. It localises to the peroxisome. In terms of biological role, structural subunit of tRNA-specific adenosine deaminase, which deaminates adenosine-34 (the first, also called wobble position of the anticodon) to inosine in many tRNAs. Inosine-34 allows the decoding of 3 different nucleotides at the third position of mRNA codons, as inosine is able to pair with U, C, and A. This chain is tRNA-specific adenosine deaminase subunit TAD3 (TAD3), found in Saccharomyces cerevisiae (strain ATCC 204508 / S288c) (Baker's yeast).